Consider the following 417-residue polypeptide: Lysosome-associated membrane glycoprotein 1 (417 aa).

Positions Met1–Ala28 are cleaved as a signal peptide. The first lumenal domain stretch occupies residues Ala29–Asp194. Topologically, residues Ala29 to Met382 are lumenal. N-linked (GlcNAc...) asparagine glycosylation is found at Asn37 and Asn45. Cys41 and Cys80 are oxidised to a cystine. Asn62 carries an N-linked (GlcNAc...) (polylactosaminoglycan) asparagine glycan. Asn76, Asn84, Asn103, and Asn107 each carry an N-linked (GlcNAc...) asparagine glycan. 2 N-linked (GlcNAc...) (polylactosaminoglycan) asparagine glycosylation sites follow: Asn121 and Asn130. Cys155 and Cys191 are joined by a disulfide. Asn165 and Asn181 each carry an N-linked (GlcNAc...) asparagine glycan. The disordered stretch occupies residues Phe184–Lys221. A hinge region spans residues Arg195–Thr227. An O-linked (GalNAc...) serine; partial glycan is attached at Ser197. O-linked (GalNAc...) threonine glycosylation is found at Thr199 and Thr200. The segment covering Thr199–Lys215 has biased composition (pro residues). 3 O-linked (GalNAc...) serine glycosylation sites follow: Ser207, Ser209, and Ser211. Residues Asn223 and Asn228 are each glycosylated (N-linked (GlcNAc...) (polylactosaminoglycan) asparagine). The interval Asn228 to Met382 is second lumenal domain. The cysteines at positions 231 and 269 are disulfide-linked. N-linked (GlcNAc...) asparagine glycosylation is found at Asn241, Asn249, Asn261, Asn293, and Asn322. Cys338 and Cys375 are joined by a disulfide. A helical transmembrane segment spans residues Leu383–Ser410. The Cytoplasmic segment spans residues His411–Ile417.

Belongs to the LAMP family. As to quaternary structure, interacts with ABCB9; this interaction strongly stabilizes ABCB9 and protects ABCB9 against lysosomal degradation. Interacts with FURIN. Interacts with TMEM175; inhibiting the proton channel activity of TMEM175. (Microbial infection) Interacts with Lassa virus protein glycoprotein. In terms of assembly, (Microbial infection) Interacts with mumps virus protein F; this interaction promotes protein F cleavage by FURIN. O- and N-glycosylated; some of the 18 N-linked glycans are polylactosaminoglycans. In terms of processing, (Microbial infection) The glycosylation of Asn-76 is essential for Lassa virus entry into cells.

It is found in the lysosome membrane. The protein localises to the endosome membrane. Its subcellular location is the late endosome membrane. It localises to the cell membrane. The protein resides in the cytolytic granule membrane. Functionally, lysosomal membrane glycoprotein which plays an important role in lysosome biogenesis, lysosomal pH regulation, autophagy and cholesterol homeostasis. Acts as an important regulator of lysosomal lumen pH regulation by acting as a direct inhibitor of the proton channel TMEM175, facilitating lysosomal acidification for optimal hydrolase activity. Also plays an important role in NK-cells cytotoxicity. Mechanistically, participates in cytotoxic granule movement to the cell surface and perforin trafficking to the lytic granule. In addition, protects NK-cells from degranulation-associated damage induced by their own cytotoxic granule content. Presents carbohydrate ligands to selectins. In terms of biological role, (Microbial infection) Acts as a receptor for Lassa virus glycoprotein. Also promotes fusion of the virus with host membrane in less acidic endosomes. Its function is as follows. (Microbial infection) Supports the FURIN-mediated cleavage of mumps virus fusion protein F by interacting with both FURIN and the unprocessed form but not the processed form of the viral protein F. The protein is Lysosome-associated membrane glycoprotein 1 of Homo sapiens (Human).